Here is a 537-residue protein sequence, read N- to C-terminus: MQETGVRNGAYGADKFGLKNLKGVKWNLTAPHLYEDALRAGEGVLSGDGSLCVDTGIFTGRSPKDKYTVRDANTENTMWWGGNQSITAEQFENLYQDFLKHAEGMSLFAQDLYGGADPSFQIKTRVFTEMAWHSLFIRTLLRRPETAELASFVPELTIIDLASFRADPARHGCKSENVVAIDFTRKIVLIGGTQYAGEMKKSVFTTLNYYLPDKGVLPMHCSANVGPDGDTAIFFGLSGTGKTTLSADPNRTLIGDDEHGWGKDGVFNFEGGCYAKCIKLSAEAEPEIFAASNRFGAILENCVLDPITRKPDFNDGSKTENTRSAYPLESIPNASPTGRAGQPKNVVMLAADAFGVMPPIAKLSPAQAMYHFLSGYTAKVAGTERGVTEPTPVFSTCFGSPFLPRDPSVYGNMLRELIAKHGVDCWLVNTGWTGGMYGTGHRMPIKVTRALLTAALDGSLRNVEFKTDPYFGFAVPTALPGVPSEILDPVKTWADKAAFDTTARKLVAMFQKNFTQFEAQVDAEVRAAQPEAKLAAE.

Residues Arg61, Tyr195, and Lys201 each coordinate substrate. Residues Lys201, His220, and 236–244 contribute to the ATP site; that span reads GLSGTGKTT. The Mn(2+) site is built by Lys201 and His220. Asp257 contacts Mn(2+). Position 285 (Glu285) interacts with ATP. Residues 312–321 are compositionally biased toward basic and acidic residues; sequence DFNDGSKTEN. The disordered stretch occupies residues 312–339; it reads DFNDGSKTENTRSAYPLESIPNASPTGR. Arg323 provides a ligand contact to substrate. ATP is bound by residues Arg323 and Thr448.

It belongs to the phosphoenolpyruvate carboxykinase (ATP) family. It depends on Mn(2+) as a cofactor.

The protein resides in the cytoplasm. The enzyme catalyses oxaloacetate + ATP = phosphoenolpyruvate + ADP + CO2. The protein operates within carbohydrate biosynthesis; gluconeogenesis. Functionally, involved in the gluconeogenesis. Catalyzes the conversion of oxaloacetate (OAA) to phosphoenolpyruvate (PEP) through direct phosphoryl transfer between the nucleoside triphosphate and OAA. This chain is Phosphoenolpyruvate carboxykinase (ATP), found in Rhodopseudomonas palustris (strain BisB18).